A 110-amino-acid chain; its full sequence is UPF0145 protein BLD_1357 (110 aa).

It belongs to the UPF0145 family.

This chain is UPF0145 protein BLD_1357, found in Bifidobacterium longum (strain DJO10A).